The sequence spans 210 residues: HTH-type transcriptional regulator TtgR (210 aa).

The HTH tetR-type domain occupies 10-70; sequence QETRAQIIEA…ALLDSLHETH (61 aa). A DNA-binding region (H-T-H motif) is located at residues 33–52; sequence TLADIAELAGVTRGAIYWHF.

Homodimer.

In terms of biological role, represses expression from the ttgABC operon promoter and its own expression. Binds to a promoter region between the divergently transcribed ttgR and ttgABC genes/operons; in the presence of chloramphenicol or tetracycline this binding no longer occurs and ttgR and ttgABC are derepressed. This suggests that TtgR binds these antibiotics. This chain is HTH-type transcriptional regulator TtgR (ttgR), found in Pseudomonas putida (strain DOT-T1E).